The sequence spans 784 residues: Rabenosyn-5 (784 aa).

The residue at position 2 (Ala2) is an N-acetylalanine. Ser3 carries the phosphoserine modification. Residues 14–37 form a C2H2-type zinc finger; the sequence is FLCPLCLKDLQSFYQLHSHYEEEH. The necessary for the correct targeting to endosomes stretch occupies residues 100 to 263; sequence RSHLSDFKKH…HCKDTLLKRE (164 aa). Residues 157-260 form an FYVE-type zinc finger; sequence DQDVPFCPDC…CCTHCKDTLL (104 aa). Positions 163, 166, 179, 182, 187, and 190 each coordinate Zn(2+). The segment covering 207–224 has biased composition (polar residues); it reads KESLSTHTSPSQSPNSVH. The tract at residues 207–241 is disordered; sequence KESLSTHTSPSQSPNSVHGSRRGSISSMSSVSSVL. 4 positions are modified to phosphoserine: Ser215, Ser219, Ser226, and Ser230. Residues 228 to 240 show a composition bias toward low complexity; the sequence is RGSISSMSSVSSV. Cys252 and Cys255 together coordinate Zn(2+). Residues 264 to 500 form a necessary for interaction with RAB4A region; the sequence is QQIDEKEHTP…QLQDEYDQQQ (237 aa). Positions 264-784 are necessary for interaction with EHD1; the sequence is QQIDEKEHTP…TLAKQKGGTD (521 aa). Coiled-coil stretches lie at residues 378-414 and 472-531; these read TKEQ…LEER and QAKA…RELE. The segment covering 390–400 has biased composition (basic and acidic residues); sequence KEEMERKRAVE. The tract at residues 390–429 is disordered; that stretch reads KEEMERKRAVERQAALESQRRLEERQSGLASRAANGEVAS. A UIM domain is found at 496-515; that stretch reads YDQQQTEKAIELSRRQAEEE. A disordered region spans residues 574-732; it reads DLGSSPVPSS…DSDSGPEAEE (159 aa). Residues 579-598 are compositionally biased toward polar residues; it reads PVPSSTAPKTPSLSSTQPTR. The interval 627–784 is necessary for interaction with RAB5A; that stretch reads PFDEEDLSSP…TLAKQKGGTD (158 aa). Acidic residues predominate over residues 663-673; the sequence is PFEEEDEEEEA. At Ser684 the chain carries Phosphoserine. The segment covering 722 to 732 has biased composition (acidic residues); sequence MDSDSGPEAEE.

Interacts with EHD1, RAB4A, RAB5A, RAB14, RAB22A, RAB24 and VPS45. Binds simultaneously to RAB4A and RAB5A in vitro. Interacts with RAB4A and RAB5A that has been activated by GTP binding.

It is found in the cell membrane. It localises to the early endosome membrane. Rab4/Rab5 effector protein acting in early endocytic membrane fusion and membrane trafficking of recycling endosomes. Required for endosome fusion either homotypically or with clathrin coated vesicles. Plays a role in the lysosomal trafficking of CTSD/cathepsin D from the Golgi to lysosomes. Also promotes the recycling of transferrin directly from early endosomes to the plasma membrane. Binds phospholipid vesicles containing phosphatidylinositol 3-phosphate (PtdInsP3). Plays a role in the recycling of transferrin receptor to the plasma membrane. The polypeptide is Rabenosyn-5 (Homo sapiens (Human)).